The primary structure comprises 474 residues: Adenosylhomocysteinase (474 aa).

The substrate site is built by Thr53, Asp135, and Glu197. 198–200 lines the NAD(+) pocket; that stretch reads TTT. Residues Lys227 and Asp231 each coordinate substrate. NAD(+) contacts are provided by residues Asn232, 261–266, Glu284, Asn319, 340–342, and Asn388; these read GYGDVG and IGH.

This sequence belongs to the adenosylhomocysteinase family. It depends on NAD(+) as a cofactor.

The protein localises to the cytoplasm. It catalyses the reaction S-adenosyl-L-homocysteine + H2O = L-homocysteine + adenosine. It participates in amino-acid biosynthesis; L-homocysteine biosynthesis; L-homocysteine from S-adenosyl-L-homocysteine: step 1/1. Functionally, may play a key role in the regulation of the intracellular concentration of adenosylhomocysteine. The sequence is that of Adenosylhomocysteinase from Corynebacterium glutamicum (strain ATCC 13032 / DSM 20300 / JCM 1318 / BCRC 11384 / CCUG 27702 / LMG 3730 / NBRC 12168 / NCIMB 10025 / NRRL B-2784 / 534).